Reading from the N-terminus, the 265-residue chain is MTSKDEAKSSSVEERRRHALDLLPPPANSNKPLTPFSIEDILNKPSVRRSYTICGTAHLLSTAEKPPAAGLPLSSRALLSQTSPLCALEELASKTFKGLEVSVLQAAEGRDGMTIFGQRQTPKKRRKSRTAFTNHQIYELEKRFLYQKYLSPADRDQIAQQLGLTNAQVITWFQNRRAKLKRDLEEMKADVESVKKMSPSTVEAVLTISELEEETNSVRDDSRSRSPQLGLSGHMPLSPSSPLTEQHTSKECSEDEEDVEIDVDD.

A compositionally biased stretch (basic and acidic residues) spans Met-1 to Leu-20. Positions Met-1 to Leu-33 are disordered. Residues Arg-125–Leu-184 constitute a DNA-binding region (homeobox). The disordered stretch occupies residues Glu-212–Asp-265. The segment covering Ser-253–Asp-265 has biased composition (acidic residues).

It is found in the nucleus. In terms of biological role, transcription factor that controls hypaxial muscle development by down-regulating myod1 and cdkn1b/p27, thereby allowing myoblasts to proliferate before the onset of terminal differentiation. In Xenopus tropicalis (Western clawed frog), this protein is Transcription factor LBX1.